A 297-amino-acid polypeptide reads, in one-letter code: Protease HtpX homolog (297 aa).

2 helical membrane passes run 5-25 and 44-64; these read IFLFLLSNILVITTIGIVLSI and IVALLVFSAVVGFVGSFMSLL. Histidine 155 lines the Zn(2+) pocket. Residue glutamate 156 is part of the active site. Zn(2+) is bound at residue histidine 159. 2 helical membrane-spanning segments follow: residues 170–190 and 204–224; these read LLQGIVNTFVVFFARIAAWAV and FIAVIVFQIVFSILGSLVVFA. Glutamate 230 serves as a coordination point for Zn(2+).

Belongs to the peptidase M48B family. The cofactor is Zn(2+).

It is found in the cell membrane. This chain is Protease HtpX homolog, found in Bacillus licheniformis (strain ATCC 14580 / DSM 13 / JCM 2505 / CCUG 7422 / NBRC 12200 / NCIMB 9375 / NCTC 10341 / NRRL NRS-1264 / Gibson 46).